A 265-amino-acid chain; its full sequence is Undecaprenyl-diphosphatase (265 aa).

The next 8 helical transmembrane spans lie at 1–21 (MDIL…FLPI), 39–59 (QGLA…ILYF), 86–106 (WCII…GNFI), 112–132 (SVSV…FADA), 140–160 (LAQM…LAMI), 186–206 (FSFL…GLKL), 219–239 (VGVL…LSFI), and 244–264 (MLPF…LVWF).

The protein belongs to the UppP family.

It localises to the cell inner membrane. It carries out the reaction di-trans,octa-cis-undecaprenyl diphosphate + H2O = di-trans,octa-cis-undecaprenyl phosphate + phosphate + H(+). Its function is as follows. Catalyzes the dephosphorylation of undecaprenyl diphosphate (UPP). Confers resistance to bacitracin. The chain is Undecaprenyl-diphosphatase from Saccharophagus degradans (strain 2-40 / ATCC 43961 / DSM 17024).